The chain runs to 432 residues: Uracil permease (432 aa).

Transmembrane regions (helical) follow at residues 25 to 45 (LFAMFGATILVPYLVGLDPSI), 65 to 85 (VPAYLGSSFAYIAPIIAAKTA), 89 to 109 (GAAMIGSFLAGLVYGVVALII), 124 to 144 (VVVGPVIIVIGLGLAGTAVGM), 155 to 175 (LLHFSVALVTLAATIVCSVLA), 181 to 201 (LIPVLVGIVVGYLYALAVGLV), 206 to 226 (VAAAKWFEWPDFLIPFADYPV), 228 to 248 (VTWEIVMLMVPVAIVTLSEHI), 305 to 325 (VYSVYVLAGAAVIAIAFGFVG), 330 to 350 (LISSIPTPVMGGVSILLFGII), 370 to 390 (NLVIASVILVIGIGGAVLKIS), and 393 to 413 (FQITGMALSAIVGVLLNLILP).

The protein belongs to the nucleobase:cation symporter-2 (NCS2) (TC 2.A.40) family.

Its subcellular location is the cell membrane. Functionally, transport of uracil in the cell. The protein is Uracil permease (pyrP) of Bacillus caldolyticus.